The sequence spans 808 residues: Probable inorganic carbon transporter subunit DabA (808 aa).

Residues cysteine 334, aspartate 336, histidine 494, and cysteine 509 each coordinate Zn(2+).

It belongs to the inorganic carbon transporter (TC 9.A.2) DabA family. As to quaternary structure, forms a complex with DabB. It depends on Zn(2+) as a cofactor.

The protein localises to the cell inner membrane. Its function is as follows. Part of an energy-coupled inorganic carbon pump. The polypeptide is Probable inorganic carbon transporter subunit DabA (Allorhizobium ampelinum (strain ATCC BAA-846 / DSM 112012 / S4) (Agrobacterium vitis (strain S4))).